Here is a 165-residue protein sequence, read N- to C-terminus: MENLVGLLRIRVKRGINLVSRDSNTSDPFVVVTMGSQKLKTRGVENSCNPEWDDELTLGINDPNQHVTLEVYDKDTFTSHDPMGDAEIDIKPFFEVQGTDIQELTNGTEIRRVKPSGDNCLAEESRIIFSNGKILQDMILQLRNVESGEVEIQIEWINVTGSSDF.

Met-1 bears the N-acetylmethionine mark. A C2 domain is found at 1 to 106 (MENLVGLLRI…QGTDIQELTN (106 aa)). Ca(2+)-binding residues include Arg-21, Asp-22, Asp-27, Asp-73, Lys-74, Asp-75, and Asp-81.

It belongs to the plant CAR protein family. As to quaternary structure, binds to PYR/PYL/RCAR abscisic acid intracellular receptors in an ABA-independent manner, both at the plasma membrane and in the nucleus.

It localises to the cell membrane. It is found in the nucleus. Functionally, stimulates the GTPase/ATPase activities of Obg-like ATPases. Mediates the transient calcium-dependent interaction of PYR/PYL/RCAR abscisic acid (ABA) receptors with the plasma membrane and thus regulates ABA sensitivity. This Arabidopsis thaliana (Mouse-ear cress) protein is Protein C2-DOMAIN ABA-RELATED 8.